Consider the following 413-residue polypeptide: MKKSKASALLWLFSLVGFMLHAQTFNLNQPMVAQNVIFEEKDGLVAVEAEYFYKQTHTDLREWYRTTKDSVAVVGRDEDANHYLNASNSSYIEVLPDTRVTHSDQLVRGVNFSNKPGQLAVVSYKIKFNSPGRYYVWVRALSTGSEDNGLHVGLNGTWPEHGQRMQWCDGKKYWMWESKQRTKDEHCGVPHAIYLDVPKAGIHEVQFSMREDGFEFDKFVLTTNSNYVPIDKGPNMTLADGNLPSSYKSKSEPSYFNTIARKLPENKFIASQEFPIDGTNFYKNGKNWLAINPEQYKQAKISTLFDFESGTYDVIYVGVGENDGRSTFRIVINNKELGTYQPPLTQMLWEEGKAFNGFWKNVKLNKGDTITVEVQVASDGNEWTRGRWAGIVFAPVGQGYVVQESPSTYIFEK.

The N-terminal stretch at 1-22 (MKKSKASALLWLFSLVGFMLHA) is a signal peptide.

It is found in the periplasm. In terms of biological role, may be involved in ulvan degradation. Ulvan is the main polysaccharide component of the Ulvales (green seaweed) cell wall. It is composed of disaccharide building blocks comprising 3-sulfated rhamnose (Rha3S) linked to D-glucuronic acid (GlcA), L-iduronic acid (IduA), or D-xylose (Xyl). This is an uncharacterized protein from Formosa agariphila (strain DSM 15362 / KCTC 12365 / LMG 23005 / KMM 3901 / M-2Alg 35-1).